The chain runs to 523 residues: Tyrosine/DOPA decarboxylase 5 (523 aa).

Residues 1–19 are compositionally biased toward polar residues; the sequence is MGSLPTDNLESMSICSQNP. 2 disordered regions span residues 1–20 and 47–66; these read MGSL…QNPL and SRSQ…APNH. At K321 the chain carries N6-(pyridoxal phosphate)lysine.

Belongs to the group II decarboxylase family. As to quaternary structure, homodimer. The cofactor is pyridoxal 5'-phosphate. As to expression, roots.

It catalyses the reaction L-tyrosine + H(+) = tyramine + CO2. The catalysed reaction is L-dopa + H(+) = dopamine + CO2. The enzyme catalyses 5-hydroxy-L-tryptophan + H(+) = serotonin + CO2. Its function is as follows. May play an important role in providing precursors for alkaloid synthesis in the roots and germinating seedlings. The sequence is that of Tyrosine/DOPA decarboxylase 5 (TYDC5) from Papaver somniferum (Opium poppy).